Consider the following 135-residue polypeptide: HTH-type transcriptional regulator DicA (135 aa).

Residues 12-66 form the HTH cro/C1-type domain; the sequence is IRYRRKNLKHTQRSLAKALKISHVSVSQWERGDSEPTGKNLFALSKVLQCSPTWI. The segment at residues 23–42 is a DNA-binding region (H-T-H motif); it reads QRSLAKALKISHVSVSQWER.

Its function is as follows. This protein is a repressor of division inhibition gene dicB. In Escherichia coli (strain K12), this protein is HTH-type transcriptional regulator DicA (dicA).